A 155-amino-acid chain; its full sequence is Small ribosomal subunit protein uS7c (155 aa).

The protein belongs to the universal ribosomal protein uS7 family. Part of the 30S ribosomal subunit.

The protein localises to the plastid. It is found in the chloroplast. Functionally, one of the primary rRNA binding proteins, it binds directly to 16S rRNA where it nucleates assembly of the head domain of the 30S subunit. This is Small ribosomal subunit protein uS7c (rps7) from Coelogyne cristata (Orchid).